The primary structure comprises 837 residues: Translation initiation factor IF-2 (837 aa).

The tract at residues 94-252 (QRSPEEIEAE…NAHGFQSPTG (159 aa)) is disordered. Residues 96-136 (SPEEIEAERKRELDERRAVENAARQKAEEEARVRAEEEARR) are compositionally biased toward basic and acidic residues. The span at 137–171 (QPAAPSAPAEAVAAPAPVAEPVREAAPVVAAAPAA) shows a compositional bias: low complexity. Composition is skewed to basic and acidic residues over residues 172–213 (DTRK…EKAP) and 221–230 (TTDEESDGFR). Over residues 231–244 (RGGRGKAKLKKRNA) the composition is skewed to basic residues. A tr-type G domain is found at 337 to 506 (PRAPVVTVMG…LLQAEVLELT (170 aa)). Positions 346 to 353 (GHVDHGKT) are G1. 346–353 (GHVDHGKT) lines the GTP pocket. The interval 371–375 (GITQH) is G2. Residues 392 to 395 (DTPG) form a G3 region. GTP-binding positions include 392 to 396 (DTPGH) and 446 to 449 (NKID). Positions 446 to 449 (NKID) are G4. Residues 482–484 (SAK) are G5.

Belongs to the TRAFAC class translation factor GTPase superfamily. Classic translation factor GTPase family. IF-2 subfamily.

The protein resides in the cytoplasm. One of the essential components for the initiation of protein synthesis. Protects formylmethionyl-tRNA from spontaneous hydrolysis and promotes its binding to the 30S ribosomal subunits. Also involved in the hydrolysis of GTP during the formation of the 70S ribosomal complex. The protein is Translation initiation factor IF-2 of Pseudomonas fluorescens (strain Pf0-1).